The following is a 555-amino-acid chain: Heterochromatin protein 1-binding protein 3 (555 aa).

Ala2 is modified (N-acetylalanine). Ser6 is subject to Phosphoserine. Residues 29–134 (KLGEKVEDNT…KEKKVKKTIP (106 aa)) form a disordered region. Thr51 is subject to Phosphothreonine. Over residues 51–67 (TPPKSKLAEGVEEKPEP) the composition is skewed to basic and acidic residues. Lys64 is covalently cross-linked (Glycyl lysine isopeptide (Lys-Gly) (interchain with G-Cter in SUMO2)). Thr85 is modified (phosphothreonine). Residue Lys97 forms a Glycyl lysine isopeptide (Lys-Gly) (interchain with G-Cter in SUMO2) linkage. Residues 100 to 127 (PENEEKEENKPSEETKKDEKDQSKEKEK) show a composition bias toward basic and acidic residues. 3 positions are modified to phosphoserine: Ser142, Ser155, and Ser156. One can recognise an H15 1 domain in the interval 157–232 (PRPKMDAILT…GASGSFVVVQ (76 aa)). The residue at position 190 (Lys190) is an N6-acetyllysine. The interval 227–254 (SFVVVQKSRKPPQKSRNRKNRSSAVDPE) is disordered. The span at 233 to 247 (KSRKPPQKSRNRKNR) shows a compositional bias: basic residues. 2 positions are modified to phosphoserine: Ser248 and Ser249. 2 H15 domains span residues 255-330 (PQVK…QLKK) and 337-413 (LGGS…QLCF). Residue Lys258 forms a Glycyl lysine isopeptide (Lys-Gly) (interchain with G-Cter in SUMO2) linkage. Residues 422–555 (LFPKKEPDDS…TMKKSFKAKK (134 aa)) form a disordered region. The segment covering 430–452 (DSKDEDEDEDEDDSSEEDSEDEE) has biased composition (acidic residues). Ser443, Ser444, and Ser448 each carry phosphoserine. The span at 491-512 (GKTRPLPKKAPPKAKSPAKKAR) shows a compositional bias: basic residues. Low complexity predominate over residues 513–532 (PSPSVIKKPSGSSSKKPAAS). Over residues 545–555 (STMKKSFKAKK) the composition is skewed to basic residues.

Interacts (via PxVxL motif) with CBX5.

It localises to the nucleus. The protein localises to the chromosome. In terms of biological role, component of heterochromatin that maintains heterochromatin integrity during G1/S progression and regulates the duration of G1 phase to critically influence cell proliferative capacity. May play a role in hypoxia-induced oncogenesis. The polypeptide is Heterochromatin protein 1-binding protein 3 (HP1BP3) (Bos taurus (Bovine)).